The chain runs to 321 residues: tRNA dimethylallyltransferase (321 aa).

24–31 (GPTASGKS) is an ATP binding site. Position 26–31 (26–31 (TASGKS)) interacts with substrate. Interaction with substrate tRNA regions lie at residues 49-52 (DSMQ) and 172-176 (QRIVR).

The protein belongs to the IPP transferase family. In terms of assembly, monomer. Mg(2+) serves as cofactor.

The catalysed reaction is adenosine(37) in tRNA + dimethylallyl diphosphate = N(6)-dimethylallyladenosine(37) in tRNA + diphosphate. Functionally, catalyzes the transfer of a dimethylallyl group onto the adenine at position 37 in tRNAs that read codons beginning with uridine, leading to the formation of N6-(dimethylallyl)adenosine (i(6)A). This Mesorhizobium japonicum (strain LMG 29417 / CECT 9101 / MAFF 303099) (Mesorhizobium loti (strain MAFF 303099)) protein is tRNA dimethylallyltransferase.